Here is a 593-residue protein sequence, read N- to C-terminus: Pentatricopeptide repeat-containing protein At5g24830 (593 aa).

PPR repeat units follow at residues 120-154 (CLSIHSSIMRDLCLQGKLDAALWLRKKMIYSGVIP), 155-189 (GLITHNHLLNGLCKAGYIEKADGLVREMREMGPSP), 190-224 (NCVSYNTLIKGLCSVNNVDKALYLFNTMNKYGIRP), 225-256 (NRVTCNIIVHALCQKGVIGNNNKKLLEEILDS), 264-298 (DIVICTILMDSCFKNGNVVQALEVWKEMSQKNVPA), 299-333 (DSVVYNVIIRGLCSSGNMVAAYGFMCDMVKRGVNP), 334-368 (DVFTYNTLISALCKEGKFDEACDLHGTMQNGGVAP), 369-403 (DQISYKVIIQGLCIHGDVNRANEFLLSMLKSSLLP), 404-438 (EVLLWNVVIDGYGRYGDTSSALSVLNLMLSYGVKP), 439-473 (NVYTNNALIHGYVKGGRLIDAWWVKNEMRSTKIHP), 474-508 (DTTTYNLLLGAACTLGHLRLAFQLYDEMLRRGCQP), and 509-543 (DIITYTELVRGLCWKGRLKKAESLLSRIQATGITI).

It belongs to the PPR family. P subfamily.

In Arabidopsis thaliana (Mouse-ear cress), this protein is Pentatricopeptide repeat-containing protein At5g24830.